The sequence spans 430 residues: Gamma-glutamyl phosphate reductase (430 aa).

Belongs to the gamma-glutamyl phosphate reductase family.

It is found in the cytoplasm. The enzyme catalyses L-glutamate 5-semialdehyde + phosphate + NADP(+) = L-glutamyl 5-phosphate + NADPH + H(+). Its pathway is amino-acid biosynthesis; L-proline biosynthesis; L-glutamate 5-semialdehyde from L-glutamate: step 2/2. In terms of biological role, catalyzes the NADPH-dependent reduction of L-glutamate 5-phosphate into L-glutamate 5-semialdehyde and phosphate. The product spontaneously undergoes cyclization to form 1-pyrroline-5-carboxylate. The polypeptide is Gamma-glutamyl phosphate reductase (Rhodopseudomonas palustris (strain BisA53)).